The following is a 1397-amino-acid chain: Centlein (1397 aa).

Disordered stretches follow at residues 1–43 (MAAR…GLAG) and 56–76 (LWRG…GAAV). Ala-2 is modified (N-acetylalanine). Residues Ser-5, Ser-9, and Ser-22 each carry the phosphoserine modification. Coiled-coil stretches lie at residues 95–126 (EEAK…KEFV) and 405–481 (VVNL…KLMA). 2 disordered regions span residues 422 to 449 (LKEK…SGKA) and 485 to 521 (CDQD…SEEL). Residues 485-503 (CDQDFSEKGTEGKHKEPPV) show a composition bias toward basic and acidic residues. Coiled coils occupy residues 674 to 778 (KNEK…KALR), 973 to 1114 (ISLR…MELL), and 1152 to 1299 (SESN…LKKM). Ser-1219 carries the phosphoserine modification. Thr-1334 carries the phosphothreonine modification.

In terms of assembly, interacts with CEP250 and CEP68. Interacts with NEK2; the interaction leads to phosphorylation of CNTLN. Phosphorylated directly or indirectly by NEK2.

It is found in the cytoplasm. Its subcellular location is the cytoskeleton. The protein resides in the microtubule organizing center. It localises to the centrosome. The protein localises to the centriole. Required for centrosome cohesion and recruitment of CEP68 to centrosomes. The sequence is that of Centlein from Mus musculus (Mouse).